The sequence spans 583 residues: Kelch-like protein 38 (583 aa).

The 68-residue stretch at 34-101 (TDVILCTEDK…IYTGSITITM (68 aa)) folds into the BTB domain. The BACK domain occupies 136-237 (CLSMIRLSEI…HPTYLFQFIA (102 aa)). Kelch repeat units lie at residues 285-332 (TLVV…CIHS), 333-385 (ILYV…SYLH), 386-433 (FIFA…ANDQ), 435-481 (IYVF…VIED), 482-523 (KIYI…VINN), and 525-575 (LYVT…PLIC).

In Danio rerio (Zebrafish), this protein is Kelch-like protein 38 (klhl38).